The following is a 500-amino-acid chain: Type-2 serine--tRNA ligase (500 aa).

Position 305 (Ala305) interacts with L-serine. Cys307 serves as a coordination point for Zn(2+). Residue Arg337 participates in L-serine binding. Residues 337 to 339 (RYE) and 348 to 349 (RV) each bind ATP. L-serine is bound by residues 354 to 356 (RIE) and Gln401. A Zn(2+)-binding site is contributed by Glu356. Glu430 provides a ligand contact to ATP. Asn433 contacts L-serine. Residue Cys459 participates in Zn(2+) binding. Position 466 (Arg466) interacts with ATP.

It belongs to the class-II aminoacyl-tRNA synthetase family. Type-2 seryl-tRNA synthetase subfamily. Homodimer. Zn(2+) serves as cofactor.

It localises to the cytoplasm. The catalysed reaction is tRNA(Ser) + L-serine + ATP = L-seryl-tRNA(Ser) + AMP + diphosphate + H(+). It carries out the reaction tRNA(Sec) + L-serine + ATP = L-seryl-tRNA(Sec) + AMP + diphosphate + H(+). The protein operates within aminoacyl-tRNA biosynthesis; selenocysteinyl-tRNA(Sec) biosynthesis; L-seryl-tRNA(Sec) from L-serine and tRNA(Sec): step 1/1. Functionally, catalyzes the attachment of serine to tRNA(Ser). Is also able to aminoacylate tRNA(Sec) with serine, to form the misacylated tRNA L-seryl-tRNA(Sec), which will be further converted into selenocysteinyl-tRNA(Sec). The sequence is that of Type-2 serine--tRNA ligase from Methanothrix thermoacetophila (strain DSM 6194 / JCM 14653 / NBRC 101360 / PT) (Methanosaeta thermophila).